We begin with the raw amino-acid sequence, 346 residues long: MTQQRPPLEIRLCGPRGFCAGVDRAIQIVVLALKKYGAPVYVRHEIVHNRYVVEGLQARGAIFVEELDEIPAAHRNQPVVFSAHGVPKSVPADAEAKNLFYLDATCPLVSKVHKQAMRHQRLGRHVILIGHSGHPEVIGTMGQLPDGAVTLIETVEDAHTCHFDDEDNLGFVTQTTLSVDDTAGIIKELQARFPNLAAPAAESICYATTNRQDAVRAAAPGCDLFLIVGAPNSSNSKRLVEVAEKAGARMSMLVQRAEDIEWEQIGDISVVGLSAGASAPEIIVDEIIDAFKARFDVKIELAETTVETENFLVNREIRDVELTVKDMAFVNGEHRVVGISKLMQGK.

A [4Fe-4S] cluster-binding site is contributed by C19. 2 residues coordinate (2E)-4-hydroxy-3-methylbut-2-enyl diphosphate: H48 and H84. Positions 48 and 84 each coordinate dimethylallyl diphosphate. Residues H48 and H84 each contribute to the isopentenyl diphosphate site. C106 contacts [4Fe-4S] cluster. Position 134 (H134) interacts with (2E)-4-hydroxy-3-methylbut-2-enyl diphosphate. Residue H134 coordinates dimethylallyl diphosphate. Residue H134 participates in isopentenyl diphosphate binding. Residue E136 is the Proton donor of the active site. T175 provides a ligand contact to (2E)-4-hydroxy-3-methylbut-2-enyl diphosphate. C205 lines the [4Fe-4S] cluster pocket. (2E)-4-hydroxy-3-methylbut-2-enyl diphosphate contacts are provided by S233, S234, N235, and S278. The dimethylallyl diphosphate site is built by S233, S234, N235, and S278. Positions 233, 234, 235, and 278 each coordinate isopentenyl diphosphate.

Belongs to the IspH family. [4Fe-4S] cluster is required as a cofactor.

The catalysed reaction is isopentenyl diphosphate + 2 oxidized [2Fe-2S]-[ferredoxin] + H2O = (2E)-4-hydroxy-3-methylbut-2-enyl diphosphate + 2 reduced [2Fe-2S]-[ferredoxin] + 2 H(+). The enzyme catalyses dimethylallyl diphosphate + 2 oxidized [2Fe-2S]-[ferredoxin] + H2O = (2E)-4-hydroxy-3-methylbut-2-enyl diphosphate + 2 reduced [2Fe-2S]-[ferredoxin] + 2 H(+). The protein operates within isoprenoid biosynthesis; dimethylallyl diphosphate biosynthesis; dimethylallyl diphosphate from (2E)-4-hydroxy-3-methylbutenyl diphosphate: step 1/1. Its pathway is isoprenoid biosynthesis; isopentenyl diphosphate biosynthesis via DXP pathway; isopentenyl diphosphate from 1-deoxy-D-xylulose 5-phosphate: step 6/6. Catalyzes the conversion of 1-hydroxy-2-methyl-2-(E)-butenyl 4-diphosphate (HMBPP) into a mixture of isopentenyl diphosphate (IPP) and dimethylallyl diphosphate (DMAPP). Acts in the terminal step of the DOXP/MEP pathway for isoprenoid precursor biosynthesis. This Brucella abortus (strain S19) protein is 4-hydroxy-3-methylbut-2-enyl diphosphate reductase.